The chain runs to 948 residues: Puromycin-sensitive aminopeptidase (948 aa).

Substrate is bound by residues E206 and 341 to 345 (GAMEN). A Zn(2+)-binding site is contributed by H377. Residue E378 is the Proton acceptor of the active site. 2 residues coordinate Zn(2+): H381 and E400.

The protein belongs to the peptidase M1 family. The cofactor is Zn(2+). As to expression, expressed mainly in intestinal cells in the posterior part of the intestine and in amphid sensory neurons and nerve ring neurons. Expressed in neurons in the male tail. Expressed in mature spermatids (at protein level).

The protein resides in the cytoplasm. It is found in the cell cortex. It localises to the chromosome. The protein localises to the cytoskeleton. Its subcellular location is the spindle pole. The enzyme catalyses Release of an N-terminal amino acid, preferentially alanine, from a wide range of peptides, amides and arylamides.. Inhibited by chelating agent 1,10-phenanthroline, aminopeptidase inhibitors actinonin, amastatin, and leuhistin, and to a lesser extent by puromycin. Its function is as follows. Aminopeptidase. Required for the exit from meiosis, probably upstream of cyclin cyb-3. Involved in the establishment of the anterior-posterior polarity at the embryonic 1-cell stage by regulating the dynamics of sperm-donated centrosomes. Plays a role in oocyte maturation. Required for embryonic development. The chain is Puromycin-sensitive aminopeptidase from Caenorhabditis elegans.